A 626-amino-acid chain; its full sequence is Replication protein E1 (626 aa).

The Nuclear localization signal signature appears at 82–84; it reads KRK. Residues S90 and S106 each carry the phosphoserine; by host modification. The interval 160–327 is DNA-binding region; that stretch reads QSQQNSNLHL…ILITENSSEV (168 aa). The 165-residue stretch at 412-576 folds into the SF3 helicase domain; it reads GSWLVIMQFL…CPLNEDGKPL (165 aa). Residue 452–459 coordinates ATP; the sequence is GPPDTGKS. Residue K533 forms a Glycyl lysine isopeptide (Lys-Gly) (interchain with G-Cter in SUMO) linkage. Over residues 598-608 the composition is skewed to acidic residues; the sequence is SDQEEEEEGDE. The tract at residues 598-626 is disordered; it reads SDQEEEEEGDENGSRGTFICSTRNSNDFT. Residues 616–626 show a composition bias toward polar residues; it reads ICSTRNSNDFT.

Belongs to the papillomaviridae E1 protein family. In terms of assembly, can form hexamers. Interacts with E2 protein; this interaction increases E1 DNA binding specificity. Interacts with host DNA polymerase subunit POLA2. Interacts with host single stranded DNA-binding protein RPA1. Interacts with host TOP1; this interaction stimulates the enzymatic activity of TOP1. Phosphorylated. In terms of processing, sumoylated.

Its subcellular location is the host nucleus. The enzyme catalyses Couples ATP hydrolysis with the unwinding of duplex DNA by translocating in the 3'-5' direction.. It carries out the reaction ATP + H2O = ADP + phosphate + H(+). In terms of biological role, ATP-dependent DNA 3'-5' helicase required for initiation of viral DNA replication. It forms a complex with the viral E2 protein. The E1-E2 complex binds to the replication origin which contains binding sites for both proteins. During the initial step, a dimer of E1 interacts with a dimer of protein E2 leading to a complex that binds the viral origin of replication with high specificity. Then, a second dimer of E1 displaces the E2 dimer in an ATP-dependent manner to form the E1 tetramer. Following this, two E1 monomers are added to each half of the site, which results in the formation of two E1 trimers on the viral ori. Subsequently, two hexamers will be created. The double hexamer acts as a bi-directional helicase machinery and unwinds the viral DNA and then recruits the host DNA polymerase to start replication. The polypeptide is Replication protein E1 (Bovine papillomavirus type 5).